The chain runs to 184 residues: ATP synthase subunit b, chloroplastic (184 aa).

Residues 27-49 (LATNPINLSVVLGVLIFFGKGVL) form a helical membrane-spanning segment.

Belongs to the ATPase B chain family. In terms of assembly, F-type ATPases have 2 components, F(1) - the catalytic core - and F(0) - the membrane proton channel. F(1) has five subunits: alpha(3), beta(3), gamma(1), delta(1), epsilon(1). F(0) has four main subunits: a(1), b(1), b'(1) and c(10-14). The alpha and beta chains form an alternating ring which encloses part of the gamma chain. F(1) is attached to F(0) by a central stalk formed by the gamma and epsilon chains, while a peripheral stalk is formed by the delta, b and b' chains.

The protein localises to the plastid. The protein resides in the chloroplast thylakoid membrane. Functionally, f(1)F(0) ATP synthase produces ATP from ADP in the presence of a proton or sodium gradient. F-type ATPases consist of two structural domains, F(1) containing the extramembraneous catalytic core and F(0) containing the membrane proton channel, linked together by a central stalk and a peripheral stalk. During catalysis, ATP synthesis in the catalytic domain of F(1) is coupled via a rotary mechanism of the central stalk subunits to proton translocation. In terms of biological role, component of the F(0) channel, it forms part of the peripheral stalk, linking F(1) to F(0). The polypeptide is ATP synthase subunit b, chloroplastic (Nicotiana sylvestris (Wood tobacco)).